The chain runs to 214 residues: Probable adenylyl-sulfate kinase (214 aa).

13-20 (GLSGAGKT) is a binding site for ATP. Residue Ser87 is the Phosphoserine intermediate of the active site. Residues 174 to 199 (WNRTNTFPLKSRPNPPHRHKSKSSRA) form a disordered region.

This sequence belongs to the APS kinase family.

The catalysed reaction is adenosine 5'-phosphosulfate + ATP = 3'-phosphoadenylyl sulfate + ADP + H(+). The protein operates within sulfur metabolism; hydrogen sulfide biosynthesis; sulfite from sulfate: step 2/3. Catalyzes the synthesis of activated sulfate. In Pseudomonas aeruginosa, this protein is Probable adenylyl-sulfate kinase.